The following is a 159-amino-acid chain: Phosphopantetheine adenylyltransferase (159 aa).

Substrate is bound at residue Ser9. Residues Ser9–Phe10 and His17 each bind ATP. Substrate contacts are provided by Lys41, Leu73, and Lys87. ATP-binding positions include Gly88–Arg90, Glu98, and Tyr122–Ser128.

This sequence belongs to the bacterial CoaD family. Homohexamer. Mg(2+) is required as a cofactor.

Its subcellular location is the cytoplasm. It catalyses the reaction (R)-4'-phosphopantetheine + ATP + H(+) = 3'-dephospho-CoA + diphosphate. Its pathway is cofactor biosynthesis; coenzyme A biosynthesis; CoA from (R)-pantothenate: step 4/5. In terms of biological role, reversibly transfers an adenylyl group from ATP to 4'-phosphopantetheine, yielding dephospho-CoA (dPCoA) and pyrophosphate. In Streptomyces coelicolor (strain ATCC BAA-471 / A3(2) / M145), this protein is Phosphopantetheine adenylyltransferase.